The following is a 119-amino-acid chain: Large ribosomal subunit protein bL19 (119 aa).

The protein belongs to the bacterial ribosomal protein bL19 family.

In terms of biological role, this protein is located at the 30S-50S ribosomal subunit interface and may play a role in the structure and function of the aminoacyl-tRNA binding site. This Petrotoga mobilis (strain DSM 10674 / SJ95) protein is Large ribosomal subunit protein bL19.